Consider the following 464-residue polypeptide: IAA-amino acid hydrolase ILR1-like 6 (464 aa).

An N-terminal signal peptide occupies residues 1-24; the sequence is MDNLRKLNLLSVSLTIIFVSLTIA. Mn(2+)-binding residues include Cys-175, His-177, Glu-211, His-235, and His-433.

Belongs to the peptidase M20 family.

The enzyme catalyses a jasmonyl-L-amino acid + H2O = a jasmonate + an L-alpha-amino acid. In terms of biological role, hydrolyzes certain amino acid conjugates of the plant growth regulator indole-3-acetic acid (IAA). Also hydrolyzes amino acid conjugates of jasmonic acid and 12-hydroxy jasmonic acid. In Arabidopsis thaliana (Mouse-ear cress), this protein is IAA-amino acid hydrolase ILR1-like 6.